The chain runs to 4652 residues: Low-density lipoprotein receptor-related protein 2 (4652 aa).

The N-terminal stretch at 1 to 25 (MERWAAAAACTLLLAFAACLAPASG) is a signal peptide. Residues 26 to 4422 (RECLGNEFRC…SKGISPGTTV (4397 aa)) are Extracellular-facing. LDL-receptor class A domains are found at residues 27 to 63 (ECLG…IGCP), 66 to 104 (TCGS…QRCP), 108 to 144 (TCSS…INCR), 142 to 181 (NCRY…LNCT), 183 to 219 (RCLR…HSCS), 223 to 259 (PCKG…DGCE), and 267 to 308 (ECYP…RVCD). Disulfide bonds link Cys-28–Cys-40, Cys-35–Cys-53, Cys-47–Cys-62, Cys-67–Cys-80, Cys-74–Cys-93, Cys-87–Cys-103, Cys-109–Cys-121, Cys-116–Cys-134, Cys-128–Cys-143, Cys-143–Cys-158, Cys-153–Cys-171, Cys-165–Cys-180, Cys-184–Cys-196, Cys-191–Cys-209, Cys-203–Cys-218, Cys-224–Cys-236, Cys-231–Cys-249, Cys-243–Cys-258, Cys-268–Cys-281, Cys-275–Cys-294, and Cys-288–Cys-307. 2 N-linked (GlcNAc...) asparagine glycosylation sites follow: Asn-160 and Asn-179. An N-linked (GlcNAc...) asparagine glycan is attached at Asn-341. Residues 348–386 (DFNDCQIWGICDHFCEDRIGHHQCFCAEGYVLEHEQHCR) enclose the EGF-like 1; calcium-binding domain. Disulfide bonds link Cys-352-Cys-362, Cys-358-Cys-371, and Cys-373-Cys-385. N-linked (GlcNAc...) asparagine glycosylation occurs at Asn-388. LDL-receptor class B repeat units lie at residues 436-478 (SKVF…DWIN), 479-521 (NKLY…DPTV), 522-568 (GYLF…DLVA), 569-613 (KRVY…FEDN), 753-795 (NAIF…DWIS), 796-837 (RNLY…HPIA), 838-881 (GYIF…DWGS), and 882-925 (SRLY…FGEY). N-linked (GlcNAc...) asparagine glycosylation is present at Asn-771. Asn-866 carries N-linked (GlcNAc...) asparagine glycosylation. N-linked (GlcNAc...) asparagine glycosylation occurs at Asn-1015. The region spanning 1025 to 1061 (QCGALSFPCNNGRCVPLHYRCDGVDDCHDNSDEVQCG) is the LDL-receptor class A 8 domain. 3 disulfides stabilise this stretch: Cys-1026-Cys-1038, Cys-1033-Cys-1051, and Cys-1045-Cys-1060. The N-linked (GlcNAc...) asparagine glycan is linked to Asn-1064. LDL-receptor class A domains are found at residues 1066–1104 (SCAP…QNCS), 1110–1146 (SCRA…KRCD), 1150–1186 (TCSP…SACV), 1188–1225 (NCTD…IDCP), 1231–1269 (MCRQ…SGCP), 1272–1308 (TCPX…KDCP), and 1313–1351 (LCPS…PLCN). Intrachain disulfides connect Cys-1067-Cys-1081, Cys-1074-Cys-1094, Cys-1088-Cys-1103, Cys-1111-Cys-1123, Cys-1118-Cys-1136, Cys-1130-Cys-1145, Cys-1151-Cys-1163, Cys-1158-Cys-1176, and Cys-1170-Cys-1185. N-linked (GlcNAc...) asparagine glycosylation is present at Asn-1102. Ca(2+) contacts are provided by Trp-1128, Asp-1131, Asp-1133, Asp-1135, Asp-1141, and Glu-1142. Residue Asn-1188 is glycosylated (N-linked (GlcNAc...) asparagine). Cystine bridges form between Cys-1189-Cys-1202, Cys-1196-Cys-1215, Cys-1209-Cys-1224, Cys-1232-Cys-1245, Cys-1239-Cys-1258, Cys-1252-Cys-1268, Cys-1273-Cys-1285, Cys-1280-Cys-1298, Cys-1292-Cys-1307, Cys-1314-Cys-1327, Cys-1321-Cys-1340, and Cys-1334-Cys-1350. Ca(2+) is bound by residues Tyr-1207, Asp-1210, Val-1212, Asp-1214, Asp-1220, and Glu-1221. A glycan (N-linked (GlcNAc...) asparagine) is linked at Asn-1329. N-linked (GlcNAc...) asparagine glycans are attached at residues Asn-1385, Asn-1452, Asn-1498, and Asn-1552. LDL-receptor class B repeat units lie at residues 1480-1522 (GRIF…DWVG), 1523-1565 (RNLY…DPRV), 1568-1611 (RVIF…DYPT), 1612-1654 (RLLY…TIFE), 1655-1696 (DSIY…VHPA), 1789-1831 (QFLY…DWLS), 1832-1881 (RNLY…DPAK), 1882-1929 (GKLY…DIQE), 1930-1971 (QKLY…YGPY), and 1972-2012 (LYYA…YRRR). Asn-1677 and Asn-1809 each carry an N-linked (GlcNAc...) asparagine glycan. Asn-2053 carries N-linked (GlcNAc...) asparagine glycosylation. LDL-receptor class B repeat units lie at residues 2105-2154 (GFVY…DWVA), 2155-2199 (GNLY…DPKN), 2200-2243 (RYLF…DHNS), 2244-2287 (GYIY…FGNS), 2429-2475 (NRIY…DWIG), 2476-2516 (RRIY…DPCQ), 2517-2560 (GYMY…DYKE), 2561-2602 (NLLY…YGQY), and 2603-2644 (IYWT…VVNN). N-linked (GlcNAc...) asparagine glycans are attached at residues Asn-2175 and Asn-2222. A glycan (N-linked (GlcNAc...) asparagine) is linked at Asn-2485. LDL-receptor class A domains lie at 2696–2734 (RCNS…TLCA), 2737–2773 (TCPP…SGCR), 2776–2815 (SCNI…KNCA), 2818–2857 (TCLP…IYCV), 2860–2897 (TCKN…ATCV), 2902–2941 (TCSS…HHCE), 2944–2986 (NCSS…QNCT), 2989–3025 (NCSG…RNCK), 3028–3066 (ACDE…HLCH), and 3071–3107 (TCPP…ERCG). 18 disulfide bridges follow: Cys-2697–Cys-2709, Cys-2704–Cys-2722, Cys-2716–Cys-2733, Cys-2738–Cys-2750, Cys-2745–Cys-2763, Cys-2757–Cys-2772, Cys-2777–Cys-2790, Cys-2785–Cys-2803, Cys-2797–Cys-2814, Cys-2819–Cys-2832, Cys-2826–Cys-2845, Cys-2839–Cys-2856, Cys-2861–Cys-2873, Cys-2868–Cys-2886, Cys-2880–Cys-2896, Cys-2903–Cys-2915, Cys-2910–Cys-2928, and Cys-2922–Cys-2940. N-linked (GlcNAc...) asparagine glycosylation is present at Asn-2698. Asn-2778 carries N-linked (GlcNAc...) asparagine glycosylation. 2 N-linked (GlcNAc...) asparagine glycosylation sites follow: Asn-2806 and Asn-2807. N-linked (GlcNAc...) asparagine glycosylation occurs at Asn-2944. 3 disulfides stabilise this stretch: Cys-2945/Cys-2962, Cys-2952/Cys-2975, and Cys-2969/Cys-2985. N-linked (GlcNAc...) asparagine glycosylation is found at Asn-2984 and Asn-2989. 9 disulfides stabilise this stretch: Cys-2990–Cys-3002, Cys-2997–Cys-3015, Cys-3009–Cys-3024, Cys-3029–Cys-3041, Cys-3036–Cys-3054, Cys-3048–Cys-3065, Cys-3072–Cys-3084, Cys-3079–Cys-3097, and Cys-3091–Cys-3106. Asn-3122 carries N-linked (GlcNAc...) asparagine glycosylation. The EGF-like 2; calcium-binding domain occupies 3149–3189 (DIDECKETPSVCSQKCENLLGSYICKCAPGYTREPDGRSCR). 3 cysteine pairs are disulfide-bonded: Cys-3153–Cys-3164, Cys-3160–Cys-3173, and Cys-3175–Cys-3188. Residues Asn-3208, Asn-3254, Asn-3312, and Asn-3352 are each glycosylated (N-linked (GlcNAc...) asparagine). LDL-receptor class B repeat units lie at residues 3236–3278 (ERLY…DWVT), 3279–3321 (RKLY…DKPR), 3330–3373 (GYVY…DYTN), 3374–3417 (DLLY…FEDT), and 3418–3458 (IYWT…YHPY). Asn-3435 and Asn-3444 each carry an N-linked (GlcNAc...) asparagine glycan. 9 consecutive LDL-receptor class A domains span residues 3509–3547 (MCSS…NTCP), 3550–3588 (FCRL…VLCE), 3591–3629 (RCES…SHCA), 3632–3670 (TCLP…QECM), 3675–3713 (RCDN…QNCE), 3716–3753 (TCKP…ENCV), 3756–3792 (QCSE…RDCE), 3795–3831 (TCHP…ATCP), and 3839–3877 (YCPA…HLCL). 27 cysteine pairs are disulfide-bonded: Cys-3510/Cys-3523, Cys-3517/Cys-3536, Cys-3530/Cys-3546, Cys-3551/Cys-3563, Cys-3558/Cys-3576, Cys-3570/Cys-3587, Cys-3592/Cys-3604, Cys-3599/Cys-3617, Cys-3611/Cys-3628, Cys-3633/Cys-3645, Cys-3640/Cys-3658, Cys-3652/Cys-3669, Cys-3676/Cys-3690, Cys-3684/Cys-3703, Cys-3697/Cys-3712, Cys-3717/Cys-3730, Cys-3725/Cys-3743, Cys-3737/Cys-3752, Cys-3757/Cys-3769, Cys-3764/Cys-3782, Cys-3776/Cys-3791, Cys-3796/Cys-3808, Cys-3803/Cys-3821, Cys-3815/Cys-3830, Cys-3840/Cys-3852, Cys-3847/Cys-3865, and Cys-3859/Cys-3876. A glycan (N-linked (GlcNAc...) asparagine) is linked at Asn-3562. Asn-3678 is a glycosylation site (N-linked (GlcNAc...) asparagine). The N-linked (GlcNAc...) asparagine glycan is linked to Asn-3878. LDL-receptor class A domains lie at 3880 to 3919 (TCDL…ENCL) and 3925 to 3961 (PCTE…TGCN). 12 cysteine pairs are disulfide-bonded: Cys-3881-Cys-3894, Cys-3889-Cys-3907, Cys-3901-Cys-3918, Cys-3926-Cys-3938, Cys-3933-Cys-3951, Cys-3945-Cys-3960, Cys-3968-Cys-3977, Cys-3973-Cys-3987, Cys-3989-Cys-4003, Cys-4009-Cys-4019, Cys-4015-Cys-4028, and Cys-4030-Cys-4045. The 41-residue stretch at 3964–4004 (EERSCAENLCEHNCTQLIGGGFICSCRPGFKASSLNRNSCE) folds into the EGF-like 3 domain. Asn-3976 carries N-linked (GlcNAc...) asparagine glycosylation. The EGF-like 4; calcium-binding domain occupies 4005–4046 (DINECEQFGVCPQNCHNTKGSYECTCAEGFRSMSEHYGERCA). Asn-4066 carries N-linked (GlcNAc...) asparagine glycosylation. LDL-receptor class B repeat units lie at residues 4152 to 4194 (RHIY…NPKQ), 4195 to 4238 (GLMY…DYVN), and 4240 to 4281 (DRIY…FESQ). An N-linked (GlcNAc...) asparagine glycan is attached at Asn-4325. Residues 4375–4409 (MPPPCRCMNEGNCYFDKNNLPKCKCPSGYMGEYCE) enclose the EGF-like 5 domain. Cystine bridges form between Cys-4379–Cys-4387, Cys-4381–Cys-4397, and Cys-4399–Cys-4408. A helical transmembrane segment spans residues 4423–4443 (AVLVTLILIIIIGGLVALGFF). At 4444–4652 (HYRKTGSILI…ANLVREDSEA (209 aa)) the chain is on the cytoplasmic side. Positions 4450-4459 (SILISMPRLP) match the SH3-binding motif. Positions 4453-4458 (ISMPRL) match the PxLPxI/L motif 1; mediates interaction with ANKRA2 motif. Positions 4456–4461 (PRLPSL) match the PxLPxI/L motif 2; mediates interaction with ANKRA2 motif. Residue Ser-4460 is modified to Phosphoserine. An Endocytosis signal motif is present at residues 4518-4523 (FENPMY). The segment covering 4536-4553 (TTTQVSESGNVYNKNYGS) has biased composition (polar residues). Residues 4536-4652 (TTTQVSESGN…ANLVREDSEA (117 aa)) are disordered. A Phosphoserine modification is found at Ser-4568. An interaction with DAB2 region spans residues 4588-4601 (QNTNFENPIYAETE). The NPXY motif signature appears at 4594-4597 (NPIY). Residues 4597 to 4600 (YAET) carry the SH2-binding motif. The SH3-binding signature appears at 4610–4621 (VTPPPSPSPPAK). Ser-4615 carries the phosphoserine modification. Residues 4626-4636 (KGTTPAYSATE) show a composition bias toward polar residues. Thr-4629 carries the post-translational modification Phosphothreonine. At Ser-4650 the chain carries Phosphoserine.

Belongs to the LDLR family. Binds plasminogen, extracellular matrix components, plasminogen activator-plasminogen activator inhibitor type I complex, apolipoprotein E-enriched beta-VLDL, lipoprotein lipase, lactoferrin, CLU/clusterin and calcium. Forms a multimeric complex together with LRPAP1. Interacts (via PxLPxI/L motif) with ANKRA2 (via ankyrin repeats). Interacts with LRP2BP. Interacts (via NPXY motif) with DAB2; the interaction is not affected by tyrosine phosphorylation of the NPXY motif. Interacts with MB. Interacts with BMP4. Interacts with the Sonic hedgehog protein N-product which is the active product of SHH. Interacts with CST3 in a calcium-dependent manner. Interacts with the vitamin-D binding protein GC/DBP. Interacts with sex hormone-binding protein SHBG. Interacts with angiotensin-2. Also interacts with angiotensin 1-7. Interacts with APOM. Interacts with selenoprotein SEPP1. Interacts with LEP. Interacts with ALB. Interacts with the antiapoptotic protein BIRC5/survivin. Interacts with matrix metalloproteinase MMP2 in complex with metalloproteinase inhibitor TIMP1. In neurons, forms a trimeric complex with APP and APPB1/FE65. Interacts with LDLRAP1/ARH; mediates trafficking of LRP2 to the endocytic recycling compartment. Does not interact with beta-amyloid protein 40 alone but interacts with the complex composed of beta-amyloid protein 40 and CLU/APOJ. Interacts with MDK. In terms of processing, a fraction undergoes proteolytic cleavage of the extracellular domain at the cell membrane to generate a cytoplasmic tail fragment. This is internalized into the early endosome from where it trafficks in an LDLRAP1/ARH-dependent manner to the endocytic recycling compartment (ERC). In the ERC, it is further cleaved by gamma-secretase to release a fragment which translocates to the nucleus and mediates transcriptional repression. N-glycosylation is required for ligand binding.

The protein localises to the apical cell membrane. It localises to the endosome lumen. The protein resides in the membrane. It is found in the clathrin-coated pit. Its subcellular location is the cell projection. The protein localises to the dendrite. It localises to the axon. Multiligand endocytic receptor. Acts together with CUBN to mediate endocytosis of high-density lipoproteins. Mediates receptor-mediated uptake of polybasic drugs such as aprotinin, aminoglycosides and polymyxin B. In the kidney, mediates the tubular uptake and clearance of leptin. Also mediates transport of leptin across the blood-brain barrier through endocytosis at the choroid plexus epithelium. Endocytosis of leptin in neuronal cells is required for hypothalamic leptin signaling and leptin-mediated regulation of feeding and body weight. Mediates endocytosis and subsequent lysosomal degradation of CST3 in kidney proximal tubule cells. Mediates renal uptake of 25-hydroxyvitamin D3 in complex with the vitamin D3 transporter GC/DBP. Mediates renal uptake of metallothionein-bound heavy metals. Together with CUBN, mediates renal reabsorption of myoglobin. Mediates renal uptake and subsequent lysosomal degradation of APOM. Plays a role in kidney selenium homeostasis by mediating renal endocytosis of selenoprotein SEPP1. Mediates renal uptake of the antiapoptotic protein BIRC5/survivin which may be important for functional integrity of the kidney. Mediates renal uptake of matrix metalloproteinase MMP2 in complex with metalloproteinase inhibitor TIMP1. Mediates endocytosis of Sonic hedgehog protein N-product (ShhN), the active product of SHH. Also mediates ShhN transcytosis. In the embryonic neuroepithelium, mediates endocytic uptake and degradation of BMP4, is required for correct SHH localization in the ventral neural tube and plays a role in patterning of the ventral telencephalon. Required at the onset of neurulation to sequester SHH on the apical surface of neuroepithelial cells of the rostral diencephalon ventral midline and to control PTCH1-dependent uptake and intracellular trafficking of SHH. During neurulation, required in neuroepithelial cells for uptake of folate bound to the folate receptor FOLR1 which is necessary for neural tube closure. In the adult brain, negatively regulates BMP signaling in the subependymal zone which enables neurogenesis to proceed. In astrocytes, mediates endocytosis of ALB which is required for the synthesis of the neurotrophic factor oleic acid. Involved in neurite branching. During optic nerve development, required for SHH-mediated migration and proliferation of oligodendrocyte precursor cells. Mediates endocytic uptake and clearance of SHH in the retinal margin which protects retinal progenitor cells from mitogenic stimuli and keeps them quiescent. Plays a role in reproductive organ development by mediating uptake in reproductive tissues of androgen and estrogen bound to the sex hormone binding protein SHBG. Mediates endocytosis of angiotensin-2. Also mediates endocytosis of angiotensis 1-7. Binds to the complex composed of beta-amyloid protein 40 and CLU/APOJ and mediates its endocytosis and lysosomal degradation. Required for embryonic heart development. Required for normal hearing, possibly through interaction with estrogen in the inner ear. The polypeptide is Low-density lipoprotein receptor-related protein 2 (Sus scrofa (Pig)).